The chain runs to 486 residues: Corytuberine synthase (486 aa).

A helical membrane pass occupies residues 6–21; the sequence is ALFSLIPVILVFILLL. Position 428 (C428) interacts with heme.

This sequence belongs to the cytochrome P450 family. Heme is required as a cofactor.

It localises to the endoplasmic reticulum membrane. The enzyme catalyses (S)-reticuline + reduced [NADPH--hemoprotein reductase] + O2 = (S)-corytuberine + oxidized [NADPH--hemoprotein reductase] + 2 H2O + 2 H(+). With respect to regulation, inhibited by ketoconazole. Functionally, cytochrome P450 that catalyzes an intramolecular C-C phenol coupling of (S)-reticuline in magnoflorine biosynthesis. Catalyzes the formation of (S)-corytuberine from (S)-reticuline, and also, with a lover efficiency, the 4'-O-demethylation of codamine to produce orientaline, and subsequent C-C-phenol coupling of orientaline. Can also use (R,S)-norreticuline, (R,S)-orientaline, (S)-N-methylcoclaurine and (S)-coclaurine as substrates, but not (R,S)-6-O-methyllaudanosoline, (R,S)-6-O-methylnorlaudanosoline, (R,S)-laudanine, (R,S)-norlaudanine, (R,S)-4'-O-methyllaudanosoline, (R,S)-pseudocodamine, (R,S)-norpseudocodamine, (R,S)-laudanosine, (R,S)-norlaudanosine, (R,S)-laudanosoline or (R,S)-norlaudanosoline. The chain is Corytuberine synthase from Coptis japonica (Japanese goldthread).